Reading from the N-terminus, the 86-residue chain is Omega-theraphotoxin-Hhn1f 3 (86 aa).

The first 21 residues, 1 to 21 (MKSIVFVALFGLALLAVACSA), serve as a signal peptide directing secretion. The propeptide occupies 22–50 (SEDAHKELLKEVVRAMVVDKTDAVQAEER). 3 cysteine pairs are disulfide-bonded: cysteine 52–cysteine 66, cysteine 59–cysteine 71, and cysteine 65–cysteine 78.

It belongs to the neurotoxin 10 (Hwtx-1) family. 17 (Hntx-9) subfamily. In terms of tissue distribution, expressed by the venom gland.

The protein resides in the secreted. Its function is as follows. Ion channel inhibitor. This is Omega-theraphotoxin-Hhn1f 3 from Cyriopagopus hainanus (Chinese bird spider).